The primary structure comprises 235 residues: Phosphoribosylaminoimidazole-succinocarboxamide synthase (235 aa).

Belongs to the SAICAR synthetase family.

It catalyses the reaction 5-amino-1-(5-phospho-D-ribosyl)imidazole-4-carboxylate + L-aspartate + ATP = (2S)-2-[5-amino-1-(5-phospho-beta-D-ribosyl)imidazole-4-carboxamido]succinate + ADP + phosphate + 2 H(+). It participates in purine metabolism; IMP biosynthesis via de novo pathway; 5-amino-1-(5-phospho-D-ribosyl)imidazole-4-carboxamide from 5-amino-1-(5-phospho-D-ribosyl)imidazole-4-carboxylate: step 1/2. The chain is Phosphoribosylaminoimidazole-succinocarboxamide synthase from Streptococcus pneumoniae (strain JJA).